We begin with the raw amino-acid sequence, 132 residues long: D-ribose pyranase (132 aa).

H20 acts as the Proton donor in catalysis. Substrate is bound by residues D28, H98, and 121-123 (YSN).

It belongs to the RbsD / FucU family. RbsD subfamily. Homodecamer.

Its subcellular location is the cytoplasm. The enzyme catalyses beta-D-ribopyranose = beta-D-ribofuranose. The protein operates within carbohydrate metabolism; D-ribose degradation; D-ribose 5-phosphate from beta-D-ribopyranose: step 1/2. In terms of biological role, catalyzes the interconversion of beta-pyran and beta-furan forms of D-ribose. The protein is D-ribose pyranase of Kosmotoga olearia (strain ATCC BAA-1733 / DSM 21960 / TBF 19.5.1).